Consider the following 875-residue polypeptide: Phosphoenolpyruvate carboxylase (875 aa).

Residues His137 and Lys542 contribute to the active site.

It belongs to the PEPCase type 1 family. The cofactor is Mg(2+).

It catalyses the reaction oxaloacetate + phosphate = phosphoenolpyruvate + hydrogencarbonate. Functionally, forms oxaloacetate, a four-carbon dicarboxylic acid source for the tricarboxylic acid cycle. This Pseudomonas putida (strain ATCC 47054 / DSM 6125 / CFBP 8728 / NCIMB 11950 / KT2440) protein is Phosphoenolpyruvate carboxylase.